We begin with the raw amino-acid sequence, 111 residues long: UPF0339 protein ACIAD0721 (111 aa).

2 tandem repeats follow at residues 10–58 (AKDG…RYER) and 61–109 (AKND…VKDL). A disordered region spans residues 89–111 (SRDKGIESVKNNGTTATVKDLTG).

The protein belongs to the UPF0339 family. Duplicated subfamily.

The polypeptide is UPF0339 protein ACIAD0721 (Acinetobacter baylyi (strain ATCC 33305 / BD413 / ADP1)).